The sequence spans 548 residues: Probable delta-1-pyrroline-5-carboxylate dehydrogenase (548 aa).

Glu298 functions as the Proton acceptor in the catalytic mechanism. Cys332 acts as the Nucleophile in catalysis. Phosphoserine is present on residues Ser391, Ser394, and Ser396.

It belongs to the aldehyde dehydrogenase family.

The enzyme catalyses L-glutamate 5-semialdehyde + NAD(+) + H2O = L-glutamate + NADH + 2 H(+). Its pathway is amino-acid degradation; L-proline degradation into L-glutamate; L-glutamate from L-proline: step 2/2. The polypeptide is Probable delta-1-pyrroline-5-carboxylate dehydrogenase (Schizosaccharomyces pombe (strain 972 / ATCC 24843) (Fission yeast)).